The chain runs to 614 residues: Allergen Ara h 1, clone P17 (614 aa).

Positions 1–25 (MRGRVSPLMLLLGILVLASVSATQA) are cleaved as a signal peptide. 4 disordered regions span residues 72 to 177 (DTGA…RRFS), 334 to 356 (NAGG…DNEG), 372 to 397 (HAKS…DGEP), and 464 to 491 (KEQQ…SNRE). A compositionally biased stretch (basic and acidic residues) spans 81 to 132 (PPGERTRGRQPGDYDDDRRQPRREEGGRWGPAEPREREREEDWRQPREDWRR). Positions 169 to 327 (FYFPSRRFST…AFNAEFNEIR (159 aa)) constitute a Cupin type-1 1 domain. A Cupin type-1 2 domain is found at 390–566 (INLRDGEPDL…AFPGSGEQVE (177 aa)). A compositionally biased stretch (basic and acidic residues) spans 464–474 (KEQQQRGRREQ). The segment covering 475–486 (EWEEEEEDEEEE) has biased composition (acidic residues). Residue Asn516 is glycosylated (N-linked (GlcNAc...) asparagine). The disordered stretch occupies residues 572 to 614 (QRESHFVSARPQSQSPSSPEKEDQEEENQGGKGPLLSILKAFN).

It belongs to the 7S seed storage protein family.

This chain is Allergen Ara h 1, clone P17, found in Arachis hypogaea (Peanut).